A 117-amino-acid chain; its full sequence is Large ribosomal subunit protein uL22 (117 aa).

Belongs to the universal ribosomal protein uL22 family. Part of the 50S ribosomal subunit.

In terms of biological role, this protein binds specifically to 23S rRNA; its binding is stimulated by other ribosomal proteins, e.g. L4, L17, and L20. It is important during the early stages of 50S assembly. It makes multiple contacts with different domains of the 23S rRNA in the assembled 50S subunit and ribosome. The globular domain of the protein is located near the polypeptide exit tunnel on the outside of the subunit, while an extended beta-hairpin is found that lines the wall of the exit tunnel in the center of the 70S ribosome. This is Large ribosomal subunit protein uL22 from Leptospira biflexa serovar Patoc (strain Patoc 1 / ATCC 23582 / Paris).